A 428-amino-acid polypeptide reads, in one-letter code: 3-phosphoshikimate 1-carboxyvinyltransferase (428 aa).

Residues Lys21, Ser22, and Arg26 each contribute to the 3-phosphoshikimate site. Residue Lys21 participates in phosphoenolpyruvate binding. Gly91 and Arg119 together coordinate phosphoenolpyruvate. Ser164, Gln166, Asp313, and Lys340 together coordinate 3-phosphoshikimate. Gln166 provides a ligand contact to phosphoenolpyruvate. Asp313 functions as the Proton acceptor in the catalytic mechanism. Phosphoenolpyruvate-binding residues include Arg344 and Arg386.

Belongs to the EPSP synthase family. Monomer.

Its subcellular location is the cytoplasm. It carries out the reaction 3-phosphoshikimate + phosphoenolpyruvate = 5-O-(1-carboxyvinyl)-3-phosphoshikimate + phosphate. The protein operates within metabolic intermediate biosynthesis; chorismate biosynthesis; chorismate from D-erythrose 4-phosphate and phosphoenolpyruvate: step 6/7. Catalyzes the transfer of the enolpyruvyl moiety of phosphoenolpyruvate (PEP) to the 5-hydroxyl of shikimate-3-phosphate (S3P) to produce enolpyruvyl shikimate-3-phosphate and inorganic phosphate. The protein is 3-phosphoshikimate 1-carboxyvinyltransferase of Campylobacter jejuni (strain RM1221).